We begin with the raw amino-acid sequence, 348 residues long: Histidinol-phosphate aminotransferase (348 aa).

The residue at position 210 (K210) is an N6-(pyridoxal phosphate)lysine.

The protein belongs to the class-II pyridoxal-phosphate-dependent aminotransferase family. Histidinol-phosphate aminotransferase subfamily. In terms of assembly, homodimer. Requires pyridoxal 5'-phosphate as cofactor.

The enzyme catalyses L-histidinol phosphate + 2-oxoglutarate = 3-(imidazol-4-yl)-2-oxopropyl phosphate + L-glutamate. The protein operates within amino-acid biosynthesis; L-histidine biosynthesis; L-histidine from 5-phospho-alpha-D-ribose 1-diphosphate: step 7/9. The chain is Histidinol-phosphate aminotransferase from Pseudomonas putida (strain ATCC 700007 / DSM 6899 / JCM 31910 / BCRC 17059 / LMG 24140 / F1).